We begin with the raw amino-acid sequence, 34 residues long: Protamine-Y1/Y2 (34 aa).

The disordered stretch occupies residues 1 to 34 (PRRRRQASRPVRRRRRYRRSTAARRRRRVVRRRR).

In terms of tissue distribution, testis.

The protein resides in the nucleus. Its subcellular location is the chromosome. Its function is as follows. Protamines substitute for histones in the chromatin of sperm during the haploid phase of spermatogenesis. They compact sperm DNA into a highly condensed, stable and inactive complex. This chain is Protamine-Y1/Y2, found in Thunnus thynnus (Atlantic bluefin tuna).